Reading from the N-terminus, the 250-residue chain is MMSFSLLSIVSIALAATVSATSDGTNAYTAYPSVAKTASINGFADKIYDQLPECAKECVKQSTSNTPCPYWDTGCLCVMPQFGGAIGDCVAKNCKGKEVDSVESLATSICSSAGVGEPYWMIPSSVSDALAKAANAASATTSVETATKSAAAELATTSDTTIVASTSHESKVAETSVAQQTASTEKSSAAETSRAKETSKAEESSKAEETSVAQSSSSANVASVSAETANAGNMPVIAIGGVIAAFAALI.

The first 20 residues, 1-20 (MMSFSLLSIVSIALAATVSA), serve as a signal peptide directing secretion. Residues 26–137 (NAYTAYPSVA…DALAKAANAA (112 aa)) form the CFEM domain. 4 cysteine pairs are disulfide-bonded: Cys54/Cys94, Cys58/Cys89, Cys68/Cys75, and Cys77/Cys110. Asp72 is a heme binding site. Positions 165–219 (STSHESKVAETSVAQQTASTEKSSAAETSRAKETSKAEESSKAEETSVAQSSSSA) are disordered. Positions 178 to 192 (AQQTASTEKSSAAET) are enriched in low complexity. The span at 193–209 (SRAKETSKAEESSKAEE) shows a compositional bias: basic and acidic residues. The span at 210–219 (TSVAQSSSSA) shows a compositional bias: low complexity. Asn230 is lipidated: GPI-anchor amidated asparagine. The propeptide at 231–250 (AGNMPVIAIGGVIAAFAALI) is removed in mature form.

The protein belongs to the RBT5 family. Post-translationally, the GPI-anchor is attached to the protein in the endoplasmic reticulum and serves to target the protein to the cell surface. There, the glucosamine-inositol phospholipid moiety is cleaved off and the GPI-modified mannoprotein is covalently attached via its lipidless GPI glycan remnant to the 1,6-beta-glucan of the outer cell wall layer. Mannosylated.

The protein localises to the secreted. Its subcellular location is the cell wall. It localises to the cell membrane. Heme-binding protein involved in heme-iron utilization. The ability to acquire iron from host tissues is a major virulence factor of pathogenic microorganisms. Involved in biofilm formation. This is GPI-anchored hemophore PGA10 from Candida albicans (strain SC5314 / ATCC MYA-2876) (Yeast).